Here is a 765-residue protein sequence, read N- to C-terminus: Protein transport protein Sec23A (765 aa).

T2 is modified (N-acetylthreonine). Residues C61, C66, C85, and C88 each coordinate Zn(2+). At T308 the chain carries Phosphothreonine. A Gelsolin-like repeat occupies 632 to 718; that stretch reads PEPVLLDSSS…EHGGSQARFL (87 aa).

Belongs to the SEC23/SEC24 family. SEC23 subfamily. As to quaternary structure, COPII is composed of at least five proteins: the Sec23/24 complex, the Sec13/31 complex and Sar1. Interacts with SEC23IP. Interacts with HTR4. Interacts with SEC16A. Interacts with SLC6A4. Interacts (as part of the Sec23/24 complex) with SEC22B; recruits SEC22B into COPII-coated vesicles and allows the transport of this cargo from the endoplasmic reticulum to the Golgi. Interacts (via Gelsolin-like repeat) with MIA2 and MIA3; specifically involved in the transport of large cargos like the collagen COL7A1. Interacts with DDHD1. Interacts with TMEM39A. Interacts with SACM1L; this interaction is reduced in the absence of TMEM39A. Interacts with kinase FAM20C; transport of FAM20C from the endoplasmic reticulum to the Golgi is likely to be mediated by COPII vesicles.

It localises to the cytoplasmic vesicle. The protein resides in the COPII-coated vesicle membrane. Its subcellular location is the endoplasmic reticulum membrane. It is found in the cytoplasm. The protein localises to the cytosol. In terms of biological role, component of the coat protein complex II (COPII) which promotes the formation of transport vesicles from the endoplasmic reticulum (ER). The coat has two main functions, the physical deformation of the endoplasmic reticulum membrane into vesicles and the selection of cargo molecules for their transport to the Golgi complex. Required for the translocation of insulin-induced glucose transporter SLC2A4/GLUT4 to the cell membrane. In Pongo abelii (Sumatran orangutan), this protein is Protein transport protein Sec23A.